The primary structure comprises 977 residues: DNA-directed RNA polymerase 3B, chloroplastic (977 aa).

The transit peptide at 1–71 (MASTASYSPS…NNIQSQTTVC (71 aa)) directs the protein to the chloroplast. Catalysis depends on residues Asp678, Lys753, and Asp910.

The protein belongs to the phage and mitochondrial RNA polymerase family.

It is found in the plastid. The protein localises to the chloroplast. The enzyme catalyses RNA(n) + a ribonucleoside 5'-triphosphate = RNA(n+1) + diphosphate. DNA-dependent RNA polymerase catalyzes the transcription of DNA into RNA using the four ribonucleoside triphosphates as substrates. This chain is DNA-directed RNA polymerase 3B, chloroplastic (RPOT3-TOM), found in Nicotiana tabacum (Common tobacco).